Consider the following 478-residue polypeptide: F-box protein YDR306C (478 aa).

Residues 1 to 14 show a composition bias toward basic residues; it reads MANKSRPKKIKAPY. Disordered regions lie at residues 1–32 and 67–101; these read MANK…DNKA and RLSN…VIES. Residues 80–90 are compositionally biased toward low complexity; it reads QSPSSSSTSSS. Over residues 91-101 the composition is skewed to basic and acidic residues; sequence KGEKNGKVIES. The region spanning 112–173 is the F-box domain; sequence KMVLPWEIQH…CLPKLYYAPA (62 aa).

In terms of assembly, interacts with SKP1. Component of the probable SCF(YDR306C) complex containing CDC53, SKP1, RBX1 and YDR306C. In terms of processing, autoubiquitinated by the E3 ubiquitin ligase complex in conjunction with the E2 enzyme CDC34.

Its pathway is protein modification; protein ubiquitination. Its function is as follows. Substrate recognition component of a SCF (SKP1-CUL1-F-box protein) E3 ubiquitin-protein ligase complex which mediates the ubiquitination and subsequent proteasomal degradation of target proteins. Probably recognizes and binds to phosphorylated target proteins. In Saccharomyces cerevisiae (strain ATCC 204508 / S288c) (Baker's yeast), this protein is F-box protein YDR306C.